Reading from the N-terminus, the 779-residue chain is Probable glutamine--tRNA ligase (779 aa).

ATP-binding positions include 268-270 (EPN) and 274-280 (HIGHAKA). Positions 300 and 440 each coordinate L-glutamine. Residues threonine 459, 488–489 (RL), and 496–498 (LSK) each bind ATP.

It belongs to the class-I aminoacyl-tRNA synthetase family.

It carries out the reaction tRNA(Gln) + L-glutamine + ATP = L-glutaminyl-tRNA(Gln) + AMP + diphosphate. This Dictyostelium discoideum (Social amoeba) protein is Probable glutamine--tRNA ligase (glnS).